Consider the following 180-residue polypeptide: Flavodoxin B (180 aa).

The Flavodoxin-like domain occupies 4–173 (IGLFFGSNTG…RVAAWLAQIA (170 aa)).

The protein belongs to the flavodoxin family. The cofactor is FMN.

Its function is as follows. Low-potential electron donor to a number of redox enzymes. NifF is the electron donor to nitrogenase. This is Flavodoxin B (nifF) from Azotobacter chroococcum mcd 1.